Consider the following 618-residue polypeptide: Indolepyruvate oxidoreductase subunit IorA (618 aa).

2 consecutive 4Fe-4S ferredoxin-type domains span residues 559–590 and 588–617; these read RPVR…DGRV and GRVF…PEGK. C568, C571, C574, C580, C597, C600, C603, and C607 together coordinate [4Fe-4S] cluster.

Heterodimer of the IorA and IorB subunits. [4Fe-4S] cluster serves as cofactor.

It carries out the reaction indole-3-pyruvate + 2 oxidized [2Fe-2S]-[ferredoxin] + CoA = (indol-3-yl)acetyl-CoA + 2 reduced [2Fe-2S]-[ferredoxin] + CO2 + H(+). In terms of biological role, catalyzes the ferredoxin-dependent oxidative decarboxylation of arylpyruvates. This Methanothermobacter marburgensis (strain ATCC BAA-927 / DSM 2133 / JCM 14651 / NBRC 100331 / OCM 82 / Marburg) (Methanobacterium thermoautotrophicum) protein is Indolepyruvate oxidoreductase subunit IorA (iorA).